Here is a 366-residue protein sequence, read N- to C-terminus: Mannonate dehydratase (366 aa).

Belongs to the mannonate dehydratase family. Fe(2+) is required as a cofactor. Requires Mn(2+) as cofactor.

The enzyme catalyses D-mannonate = 2-dehydro-3-deoxy-D-gluconate + H2O. It functions in the pathway carbohydrate metabolism; pentose and glucuronate interconversion. Catalyzes the dehydration of D-mannonate. The sequence is that of Mannonate dehydratase from Streptococcus pneumoniae (strain 70585).